A 384-amino-acid chain; its full sequence is Cyclohexane-1-carbonyl-CoA dehydrogenase (384 aa).

The protein belongs to the acyl-CoA dehydrogenase family. As to quaternary structure, homotetramer. FAD serves as cofactor.

The enzyme catalyses cyclohexane-1-carbonyl-CoA + oxidized [electron-transfer flavoprotein] + H(+) = cyclohex-1-ene-1-carbonyl-CoA + reduced [electron-transfer flavoprotein]. Its function is as follows. Mediates the conversion of cyclohexane-1-carbonyl-CoA (ChCoA) into cyclohex-1-ene-1-carbonyl-CoA in biosynthesis of cyclohexane-1-carboxylate, a by-product produced during fermentation of benzoate and crotonate to acetate. The protein is Cyclohexane-1-carbonyl-CoA dehydrogenase of Syntrophus aciditrophicus (strain SB).